The chain runs to 476 residues: Chromosomal replication initiator protein DnaA (476 aa).

The domain I, interacts with DnaA modulators stretch occupies residues 1–87 (MSESSHVGLW…LMYNVLVDKS (87 aa)). The interval 87–130 (SSGATVNQESTTRSTAIPQSGLPRVDERKAPGLLRAPAVQDLDP) is domain II. The segment at 131 to 348 (HLNPNYNFET…GIVISIMAHS (218 aa)) is domain III, AAA+ region. G176, G178, K179, and T180 together coordinate ATP. Positions 349-476 (TIYNKEIDLD…KKRNVSNGER (128 aa)) are domain IV, binds dsDNA.

Belongs to the DnaA family. Oligomerizes as a right-handed, spiral filament on DNA at oriC.

Its subcellular location is the cytoplasm. Plays an essential role in the initiation and regulation of chromosomal replication. ATP-DnaA binds to the origin of replication (oriC) to initiate formation of the DNA replication initiation complex once per cell cycle. Binds the DnaA box (a 9 base pair repeat at the origin) and separates the double-stranded (ds)DNA. Forms a right-handed helical filament on oriC DNA; dsDNA binds to the exterior of the filament while single-stranded (ss)DNA is stabiized in the filament's interior. The ATP-DnaA-oriC complex binds and stabilizes one strand of the AT-rich DNA unwinding element (DUE), permitting loading of DNA polymerase. After initiation quickly degrades to an ADP-DnaA complex that is not apt for DNA replication. Binds acidic phospholipids. The polypeptide is Chromosomal replication initiator protein DnaA (Bacteroides fragilis (strain YCH46)).